A 130-amino-acid chain; its full sequence is Small ribosomal subunit protein uS8 (130 aa).

The protein belongs to the universal ribosomal protein uS8 family. As to quaternary structure, part of the 30S ribosomal subunit.

Its function is as follows. One of the primary rRNA binding proteins, it binds directly to 16S rRNA central domain where it helps coordinate assembly of the platform of the 30S subunit. The polypeptide is Small ribosomal subunit protein uS8 (Methanotorris igneus (Methanococcus igneus)).